The sequence spans 429 residues: Glutamate-1-semialdehyde 2,1-aminomutase 1 (429 aa).

At Lys268 the chain carries N6-(pyridoxal phosphate)lysine.

It belongs to the class-III pyridoxal-phosphate-dependent aminotransferase family. HemL subfamily. As to quaternary structure, homodimer. Pyridoxal 5'-phosphate serves as cofactor.

It is found in the cytoplasm. The enzyme catalyses (S)-4-amino-5-oxopentanoate = 5-aminolevulinate. The protein operates within porphyrin-containing compound metabolism; protoporphyrin-IX biosynthesis; 5-aminolevulinate from L-glutamyl-tRNA(Glu): step 2/2. The sequence is that of Glutamate-1-semialdehyde 2,1-aminomutase 1 from Listeria welshimeri serovar 6b (strain ATCC 35897 / DSM 20650 / CCUG 15529 / CIP 8149 / NCTC 11857 / SLCC 5334 / V8).